The sequence spans 61 residues: Small ribosomal subunit protein uS14 (61 aa).

The Zn(2+) site is built by Cys-24, Cys-27, Cys-40, and Cys-43.

This sequence belongs to the universal ribosomal protein uS14 family. Zinc-binding uS14 subfamily. As to quaternary structure, part of the 30S ribosomal subunit. Contacts proteins S3 and S10. Requires Zn(2+) as cofactor.

Its function is as follows. Binds 16S rRNA, required for the assembly of 30S particles and may also be responsible for determining the conformation of the 16S rRNA at the A site. This chain is Small ribosomal subunit protein uS14, found in Thermoanaerobacter sp. (strain X514).